Consider the following 122-residue polypeptide: Basic phospholipase A2 F15 (122 aa).

7 disulfides stabilise this stretch: Cys26/Cys115, Cys28/Cys44, Cys43/Cys95, Cys49/Cys122, Cys50/Cys88, Cys57/Cys81, and Cys75/Cys86. Residues Tyr27, Gly29, and Gly31 each contribute to the Ca(2+) site. The active site involves His47. Residue Asp48 coordinates Ca(2+). Residue Asp89 is part of the active site.

The protein belongs to the phospholipase A2 family. Group II subfamily. D49 sub-subfamily. When this protein is associated with crotapotin (F5 or F7), it forms the crotoxin protein. Requires Ca(2+) as cofactor. As to expression, expressed by the venom gland.

It localises to the secreted. It carries out the reaction a 1,2-diacyl-sn-glycero-3-phosphocholine + H2O = a 1-acyl-sn-glycero-3-phosphocholine + a fatty acid + H(+). Its activity is regulated as follows. Activated by heparin. Inhibited by its chaperone crotapotin. Its function is as follows. Snake venom phospholipase A2 (PLA2) that shows moderate neurotoxic activity in isolated mouse phrenic nerve diaphragm but shows high neurotoxic activity in a chick biventer cervis preparation. Also shows a high bactericidal effect against both Gram-negative and Gram-positive bacteria. PLA2 catalyzes the calcium-dependent hydrolysis of the 2-acyl groups in 3-sn-phosphoglycerides. The chain is Basic phospholipase A2 F15 from Crotalus durissus terrificus (South American rattlesnake).